A 325-amino-acid polypeptide reads, in one-letter code: SAM pointed domain-containing Ets transcription factor (325 aa).

2 disordered regions span residues 27 to 50 (GTEKAASGAMGPEKQEWSPSPPAT) and 79 to 100 (ARAGEDHPEEPEQCPVIDSQAS). Residues 119-203 (EVLKDIETAC…AHLDIWKSAA (85 aa)) enclose the PNT domain. Positions 239-322 (IHLWQFLKEL…ISQRLVYQFV (84 aa)) form a DNA-binding region, ETS.

Belongs to the ETS family. Interacts with the DNA-binding domain of the androgen receptor. Interacts with NKX3-1. As to expression, expressed in the accessory glands of sex organs including the prostate, seminal vesicle, coagulating gland in males, the oviduct in females, and in intestines. Expression is epithelial-specific.

The protein resides in the nucleus. Functionally, may function as an androgen-independent transactivator of the prostate-specific antigen (PSA) promoter. Binds to 5'-GGAT-3' DNA sequences. May play a role in the regulation of the prostate gland and/or prostate cancer development. Acts as a transcriptional activator for SERPINB5 promoter. The sequence is that of SAM pointed domain-containing Ets transcription factor (Spdef) from Mus musculus (Mouse).